The sequence spans 901 residues: HTH-type transcriptional regulator MalT (901 aa).

An ATP-binding site is contributed by 39–46 (SPAGYGKT). In terms of domain architecture, HTH luxR-type spans 829–894 (ELIRTSPLTQ…DAVQHAQQLL (66 aa)). Positions 853 to 872 (NEQIAGELAVAATTIKTHIR) form a DNA-binding region, H-T-H motif.

The protein belongs to the MalT family. As to quaternary structure, monomer in solution. Oligomerizes to an active state in the presence of the positive effectors ATP and maltotriose.

Activated by ATP and maltotriose, which are both required for DNA binding. Functionally, positively regulates the transcription of the maltose regulon whose gene products are responsible for uptake and catabolism of malto-oligosaccharides. Specifically binds to the promoter region of its target genes, recognizing a short DNA motif called the MalT box. This is HTH-type transcriptional regulator MalT from Salmonella heidelberg (strain SL476).